The chain runs to 396 residues: Elongation factor Tu (396 aa).

A tr-type G domain is found at 10 to 206 (KPHCNIGTIG…AVDSYIPQPE (197 aa)). Positions 19-26 (GHVDHGKT) are G1. 19-26 (GHVDHGKT) contacts GTP. A Mg(2+)-binding site is contributed by T26. The interval 60-64 (GITIS) is G2. Residues 81–84 (DCPG) form a G3 region. GTP-binding positions include 81–85 (DCPGH) and 136–139 (NKCD). The interval 136–139 (NKCD) is G4. Residues 174-176 (SAL) are G5.

The protein belongs to the TRAFAC class translation factor GTPase superfamily. Classic translation factor GTPase family. EF-Tu/EF-1A subfamily. As to quaternary structure, monomer.

It is found in the cytoplasm. The catalysed reaction is GTP + H2O = GDP + phosphate + H(+). GTP hydrolase that promotes the GTP-dependent binding of aminoacyl-tRNA to the A-site of ribosomes during protein biosynthesis. The sequence is that of Elongation factor Tu from Rhodopseudomonas palustris (strain BisA53).